Consider the following 916-residue polypeptide: Translation initiation factor IF-2 (916 aa).

The tract at residues 50-326 (NRDKESTSQP…NSTLQQGFNK (277 aa)) is disordered. A compositionally biased stretch (basic and acidic residues) spans 109-241 (AQREAEEKAR…LAEENAEKWT (133 aa)). The span at 277-291 (GRGRAAKAPRPKKNN) shows a compositional bias: basic residues. Positions 292–304 (RHSEKADREEARA) are enriched in basic and acidic residues. Positions 415–584 (SRAPVVTIMG…LLQAEVLELK (170 aa)) constitute a tr-type G domain. Residues 424 to 431 (GHVDHGKT) are G1. 424 to 431 (GHVDHGKT) provides a ligand contact to GTP. The G2 stretch occupies residues 449–453 (GITQH). Residues 470–473 (DTPG) form a G3 region. GTP contacts are provided by residues 470–474 (DTPGH) and 524–527 (NKID). The G4 stretch occupies residues 524-527 (NKID). Residues 560–562 (SAK) are G5.

It belongs to the TRAFAC class translation factor GTPase superfamily. Classic translation factor GTPase family. IF-2 subfamily.

It is found in the cytoplasm. One of the essential components for the initiation of protein synthesis. Protects formylmethionyl-tRNA from spontaneous hydrolysis and promotes its binding to the 30S ribosomal subunits. Also involved in the hydrolysis of GTP during the formation of the 70S ribosomal complex. The chain is Translation initiation factor IF-2 from Proteus mirabilis (strain HI4320).